The primary structure comprises 527 residues: tRNA pseudouridine synthase Pus10 (527 aa).

Residues C21 and C24 each coordinate Zn(2+). The stretch at 42–87 (KELLNELQKFLEPEKPELILEAPNPPLKKIRLHEDGIDNLSEDGKE) forms a coiled coil. At S82 the chain carries Phosphoserine. 2 residues coordinate Zn(2+): C107 and C110. Residues 302-315 (TPWIIDGERKMESS) are RNA binding forefinger loop. The active-site Nucleophile is D342. The interval 440–455 (QKTPLRVLHRRPLAVR) is RNA binding thumb loop.

Belongs to the pseudouridine synthase Pus10 family. As to quaternary structure, interacts with components of the microprocessor complex DROSHA and DGCR8. Proteolytically cleaved during TRAIL-induced cell death. Cleaved, in vitro, either by caspase-3 (CASP3) or caspase-8 (CASP8).

Its subcellular location is the nucleus. The protein localises to the cytoplasm. It localises to the mitochondrion. The enzyme catalyses uridine(55) in tRNA = pseudouridine(55) in tRNA. It catalyses the reaction uridine(54) in tRNA = pseudouridine(54) in tRNA. Its function is as follows. Protein with different functions depending on its subcellular location: involved in miRNA processing in the nucleus and acts as a tRNA pseudouridylate synthase in the cytoplasm. In the cytoplasm, acts as a pseudouridylate synthase by catalyzing synthesis of pseudouridine(54) and pseudouridine(55) from uracil-54 and uracil-55, respectively, in the psi GC loop of a subset of tRNAs. tRNA pseudouridylate synthase activity is enhanced by the presence of 1-methyladenosine at position 53-61 of tRNAs. Does not show tRNA pseudouridylate synthase activity in the nucleus. In the nucleus, promotes primary microRNAs (pri-miRNAs) processing independently of its RNA pseudouridylate synthase activity. Binds pri-miRNAs. Modulator of TRAIL/TNFSF10-induced cell death via activation of procaspase-8 and BID cleavage. Required for the progression of the apoptotic signal through intrinsic mitochondrial cell death. In Mus musculus (Mouse), this protein is tRNA pseudouridine synthase Pus10.